A 155-amino-acid polypeptide reads, in one-letter code: 2-C-methyl-D-erythritol 2,4-cyclodiphosphate synthase (155 aa).

A divalent metal cation is bound by residues aspartate 8 and histidine 10. Residues 8–10 (DVH) and 34–35 (HS) each bind 4-CDP-2-C-methyl-D-erythritol 2-phosphate. An a divalent metal cation-binding site is contributed by histidine 42. Residues 56–58 (DIG), 61–65 (FPDSD), 100–106 (AQKPKML), 132–135 (TTEE), phenylalanine 139, and lysine 142 each bind 4-CDP-2-C-methyl-D-erythritol 2-phosphate.

The protein belongs to the IspF family. In terms of assembly, homotrimer. Requires a divalent metal cation as cofactor.

The catalysed reaction is 4-CDP-2-C-methyl-D-erythritol 2-phosphate = 2-C-methyl-D-erythritol 2,4-cyclic diphosphate + CMP. It functions in the pathway isoprenoid biosynthesis; isopentenyl diphosphate biosynthesis via DXP pathway; isopentenyl diphosphate from 1-deoxy-D-xylulose 5-phosphate: step 4/6. Involved in the biosynthesis of isopentenyl diphosphate (IPP) and dimethylallyl diphosphate (DMAPP), two major building blocks of isoprenoid compounds. Catalyzes the conversion of 4-diphosphocytidyl-2-C-methyl-D-erythritol 2-phosphate (CDP-ME2P) to 2-C-methyl-D-erythritol 2,4-cyclodiphosphate (ME-CPP) with a corresponding release of cytidine 5-monophosphate (CMP). In Clostridium botulinum (strain Okra / Type B1), this protein is 2-C-methyl-D-erythritol 2,4-cyclodiphosphate synthase.